We begin with the raw amino-acid sequence, 401 residues long: Ribosomal protein uS12 methylthiotransferase RimO (401 aa).

The 108-residue stretch at 1–108 (MKINFINLGC…GIELLQTPKR (108 aa)) folds into the MTTase N-terminal domain. [4Fe-4S] cluster is bound by residues C10, C43, C72, C124, C128, and C131. Residues 110-339 (LTTKHYAYLK…FNLSQEILEE (230 aa)) enclose the Radical SAM core domain.

The protein belongs to the methylthiotransferase family. RimO subfamily. It depends on [4Fe-4S] cluster as a cofactor.

It localises to the cytoplasm. It carries out the reaction L-aspartate(89)-[ribosomal protein uS12]-hydrogen + (sulfur carrier)-SH + AH2 + 2 S-adenosyl-L-methionine = 3-methylsulfanyl-L-aspartate(89)-[ribosomal protein uS12]-hydrogen + (sulfur carrier)-H + 5'-deoxyadenosine + L-methionine + A + S-adenosyl-L-homocysteine + 2 H(+). Catalyzes the methylthiolation of an aspartic acid residue of ribosomal protein uS12. The sequence is that of Ribosomal protein uS12 methylthiotransferase RimO from Hydrogenobaculum sp. (strain Y04AAS1).